The sequence spans 868 residues: Probable mixed-linked glucan synthase 3 (868 aa).

The interval 36–68 is disordered; that stretch reads ERKAAGGGGGGAKGKHWAAADKGERRAAKECGG. A compositionally biased stretch (basic and acidic residues) spans 53–68; it reads AAADKGERRAAKECGG. Helical transmembrane passes span 86 to 106 and 116 to 136; these read LLHP…LFFG and IMWF…SWLL. Aspartate 211 is an active-site residue. Substrate is bound by residues aspartate 412 and aspartate 414. The active site involves aspartate 573. A run of 6 helical transmembrane segments spans residues 649–669, 686–706, 717–737, 771–791, 810–830, and 838–858; these read IYPV…MWLI, LLVI…WAGI, FFMI…VVNL, MLIP…VAIG, MGLL…LAIM, and IILV…YVAT.

It belongs to the glycosyltransferase 2 family. Plant cellulose synthase-like F subfamily.

Its subcellular location is the golgi apparatus membrane. Its function is as follows. May catalyze both beta-1,3 and beta-1,4 glycosidic linkage on beta-D-glucan. Essential for (1,3;1,4)-beta-D-glucans synthesis in grasses and cereals (Poaceae). The mixed-linked glucans (which are not present in walls of dicotyledons or most other monocotyledonous plants) are particularly important constituents of the walls of the starchy endosperm and aleurone cells of cereal grains such as oats, wheat, rice and barley. They can account for up to 70% by weight of the wall. The protein is Probable mixed-linked glucan synthase 3 (CSLF3) of Oryza sativa subsp. japonica (Rice).